A 608-amino-acid chain; its full sequence is Prolactin receptor (608 aa).

A signal peptide spans 1–19; sequence MSSALAYMLLVLSISLLNG. Topologically, residues 20–229 are extracellular; sequence QSPPGKPEIH…EIPNDFTLKD (210 aa). Fibronectin type-III domains are found at residues 22–122 and 124–224; these read PPGK…IVEP and PPRN…IPND. Residues Cys-31 and Cys-41 are joined by a disulfide bond. Asn-54 carries N-linked (GlcNAc...) asparagine glycosylation. A disulfide bridge links Cys-70 with Cys-81. N-linked (GlcNAc...) asparagine glycans are attached at residues Asn-99 and Asn-127. Zn(2+)-binding residues include Asp-206 and His-207. A WSXWS motif motif is present at residues 210 to 214; sequence WSRWG. The chain crosses the membrane as a helical span at residues 230–253; it reads TTVWIIVAVLSAVICLIMVWAVAL. The Cytoplasmic portion of the chain corresponds to 254–608; the sequence is KGYSMMTCIF…DPTCFMHSFH (355 aa). The Box 1 motif signature appears at 262–270; it reads IFPPVPGPK. Disordered regions lie at residues 317–355, 377–419, and 466–487; these read DERL…HSLL, KPEN…TRRS, and GAKS…EKGP. Residues 318 to 327 are compositionally biased toward basic and acidic residues; it reads ERLMPSHSKE. Residues 345-354 are compositionally biased toward low complexity; that stretch reads GHGSYDSHSL. Residues 398-408 show a composition bias toward polar residues; it reads CHTDTSKSTTW.

This sequence belongs to the type I cytokine receptor family. Type 1 subfamily. Interacts with SMARCA1. Interacts with NEK3 and VAV2 and this interaction is prolactin-dependent.

The protein localises to the membrane. In terms of biological role, this is a receptor for the anterior pituitary hormone prolactin. The protein is Prolactin receptor (Prlr) of Mus musculus (Mouse).